The primary structure comprises 150 residues: Deoxyuridine 5'-triphosphate nucleotidohydrolase (150 aa).

Substrate-binding positions include Arg-69–Gly-71, Asn-82, Leu-86–Asp-88, and Lys-96.

The protein belongs to the dUTPase family. The cofactor is Mg(2+).

It carries out the reaction dUTP + H2O = dUMP + diphosphate + H(+). The protein operates within pyrimidine metabolism; dUMP biosynthesis; dUMP from dCTP (dUTP route): step 2/2. Functionally, this enzyme is involved in nucleotide metabolism: it produces dUMP, the immediate precursor of thymidine nucleotides and it decreases the intracellular concentration of dUTP so that uracil cannot be incorporated into DNA. In Neisseria meningitidis serogroup B (strain ATCC BAA-335 / MC58), this protein is Deoxyuridine 5'-triphosphate nucleotidohydrolase.